A 421-amino-acid polypeptide reads, in one-letter code: L-Ala-D/L-amino acid epimerase (421 aa).

Substrate is bound by residues Thr193 and 218–220; that span reads KLK. The Mg(2+) site is built by Asp247, Glu275, and Asp304. Residues Lys328 and 380–382 contribute to the substrate site; that span reads DLD.

The protein belongs to the mandelate racemase/muconate lactonizing enzyme family. It depends on Mg(2+) as a cofactor.

Functionally, catalyzes the epimerization of various hydrophobic and polar dipeptides. Has epimerase activity with L-Ala-L-Ala, L-Ala-L-Ser, L-Ala-L-Thr and L-Ala-L-Trp (in vitro). This chain is L-Ala-D/L-amino acid epimerase, found in Populus trichocarpa (Western balsam poplar).